Reading from the N-terminus, the 343-residue chain is F17b-G fimbrial adhesin (343 aa).

Residues 1-22 (MTNFYKVFLAVFILVCCNISHA) form the signal peptide. Residues 23 to 199 (VVSFIGSTEN…LNPFTLNDTV (177 aa)) are receptor-binding lectin domain. A carbohydrate-binding positions include 65–66 (AN), 110–111 (DT), and 138–141 (STQG). Residues cysteine 75 and cysteine 132 are joined by a disulfide bond. Residues 200–343 (TSCRLLTPSA…GISTFTFSYQ (144 aa)) are fimbrillin-binding domain. The segment at 287–307 (LKFGPDSPVKGNENQWQLSTG) is disordered. A compositionally biased stretch (polar residues) spans 298-307 (NENQWQLSTG).

The protein belongs to the fimbrial protein family.

It is found in the fimbrium. In terms of biological role, essential fimbrial adhesion factor that mediates binding to N-acetylglucosamine-containing receptors in the host intestinal microvilli, leading to colonization of the intestinal tissue, and diarrhea or septicemia. Also confers adhesiveness to laminin and basement membranes. The sequence is that of F17b-G fimbrial adhesin (f17bG) from Escherichia coli.